The sequence spans 1146 residues: Sodium/hydrogen exchanger 7 (1146 aa).

The Extracellular segment spans residues 1–28; that stretch reads MTTVIDATMAYRFLEEATDSSSSSSSSK. Residues 29–49 form a helical membrane-spanning segment; it reads LESSPVDAVLFVGMSLVLGIA. At 50–58 the chain is on the cytoplasmic side; that stretch reads SRHLLRGTR. A helical transmembrane segment spans residues 59–79; the sequence is VPYTVALLVIGIALGSLEYGA. Topologically, residues 80–99 are extracellular; it reads KHNLGKIGHGIRIWNEIDPE. Residues 100–120 traverse the membrane as a helical segment; the sequence is LLLAVFLPALLFESSFSMEVH. Residues 121 to 127 lie on the Cytoplasmic side of the membrane; sequence QIKRCLG. The chain crosses the membrane as a helical span at residues 128 to 148; the sequence is QMVLLAVPGVLISTACLGSLV. The Extracellular portion of the chain corresponds to 149-159; it reads KVTFPYEWDWK. A helical transmembrane segment spans residues 160–180; the sequence is TSLLLGGLLSATDPVAVVALL. At 181–191 the chain is on the cytoplasmic side; sequence KELGASKKLST. Residues 192-212 form a helical membrane-spanning segment; the sequence is IIEGESLMNDGTAIVVFQLFL. The Extracellular segment spans residues 213–227; it reads KMAMGQNSDWSSIIK. A helical membrane pass occupies residues 228–250; that stretch reads FLLKVALGAVGIGLAFGIASVIW. At 251–253 the chain is on the cytoplasmic side; that stretch reads LKF. The helical transmembrane segment at 254–273 threads the bilayer; sequence IFNDTVIEITLTIAVSYFAY. Topologically, residues 274-278 are extracellular; sequence YTAQE. Residues 279 to 299 traverse the membrane as a helical segment; it reads WAGASGVLTVMTLGMFYAAFA. Topologically, residues 300 to 313 are cytoplasmic; the sequence is RTAFKGDSQKSLHH. Residues 314 to 334 traverse the membrane as a helical segment; the sequence is FWEMVAYIANTLIFILSGVVI. Residues 335-352 are Extracellular-facing; it reads AEGILDSDKIAYQGNSWR. The chain crosses the membrane as a helical span at residues 353 to 373; it reads FLFLLYVYIQLSRVVVVGVLY. The Cytoplasmic portion of the chain corresponds to 374-387; it reads PLLCRFGYGLDWKE. The chain crosses the membrane as a helical span at residues 388 to 408; sequence SIILVWSGLRGAVALALSLSV. At 409–420 the chain is on the extracellular side; it reads KQSSGNSHISKE. The helical transmembrane segment at 421 to 441 threads the bilayer; the sequence is TGTLFLFFTGGIVFLTLIVNG. Over 442-1146 the chain is Cytoplasmic; it reads STTQFVLRLL…PSKIVFRNDL (705 aa). Disordered stretches follow at residues 981–1001 and 1102–1128; these read LHRRPSSLTPPRSSSSDQLQR and CQLPLKGESSTRQNTMVESSDEEDEDE. A compositionally biased stretch (low complexity) spans 986–996; the sequence is SSLTPPRSSSS. The segment covering 1109–1118 has biased composition (polar residues); sequence ESSTRQNTMV.

This sequence belongs to the monovalent cation:proton antiporter 1 (CPA1) transporter (TC 2.A.36) family. In terms of assembly, interacts with CIPK24/SOS2 and CBL4/SOS3. Phosphorylated by CIPK24/SOS2 in complex with CBL4/SOS3. As to expression, more expressed in roots than in shoots. Mostly localized in parenchyma cells at the xylem/symplast boundary in roots, hypocotyls, stems and leaves. Also present in root tips epidermal cells.

It is found in the cell membrane. The enzyme catalyses Na(+)(in) + H(+)(out) = Na(+)(out) + H(+)(in). It catalyses the reaction K(+)(in) + H(+)(out) = K(+)(out) + H(+)(in). In terms of biological role, acts in electroneutral exchange of protons for cations such as Na(+) or Li(+) across plasma membrane. Involved in Na(+) and K(+) homeostasis. Required for cytoplasmic Na(+) and Li(+) detoxification by secreting them from the cytoplasm to the extracellular space. Regulates Na(+) content of the xylem sap. This chain is Sodium/hydrogen exchanger 7 (NHX7), found in Arabidopsis thaliana (Mouse-ear cress).